The following is a 487-amino-acid chain: Malonate-semialdehyde dehydrogenase 3 (487 aa).

The NAD(+) site is built by phenylalanine 154, lysine 178, glutamate 181, arginine 182, and serine 231. Residue cysteine 286 is the Nucleophile of the active site. An NAD(+)-binding site is contributed by glutamate 386.

Belongs to the aldehyde dehydrogenase family. IolA subfamily. In terms of assembly, homotetramer.

It catalyses the reaction 3-oxopropanoate + NAD(+) + CoA + H2O = hydrogencarbonate + acetyl-CoA + NADH + H(+). It carries out the reaction 2-methyl-3-oxopropanoate + NAD(+) + CoA + H2O = propanoyl-CoA + hydrogencarbonate + NADH + H(+). It participates in polyol metabolism; myo-inositol degradation into acetyl-CoA; acetyl-CoA from myo-inositol: step 7/7. Functionally, catalyzes the oxidation of malonate semialdehyde (MSA) and methylmalonate semialdehyde (MMSA) into acetyl-CoA and propanoyl-CoA, respectively. Is involved in a myo-inositol catabolic pathway. Bicarbonate, and not CO2, is the end-product of the enzymatic reaction. In Bacillus cereus (strain ZK / E33L), this protein is Malonate-semialdehyde dehydrogenase 3.